Reading from the N-terminus, the 187-residue chain is Ribosome-recycling factor (187 aa).

The protein belongs to the RRF family.

The protein localises to the cytoplasm. In terms of biological role, responsible for the release of ribosomes from messenger RNA at the termination of protein biosynthesis. May increase the efficiency of translation by recycling ribosomes from one round of translation to another. This Rhodopseudomonas palustris (strain BisB18) protein is Ribosome-recycling factor.